The following is a 503-amino-acid chain: Potassium voltage-gated channel subfamily V member 1 (503 aa).

Disordered stretches follow at residues 1–20 and 171–192; these read MDLS…DSGS and KKDT…KGPC. Over 3–213 the chain is Cytoplasmic; it reads LSPRNRPLLD…EKPGSSTAAR (211 aa). Over residues 10–20 the composition is skewed to low complexity; sequence LLDSSSLDSGS. Residues 171–187 are compositionally biased toward basic and acidic residues; it reads KKDTDDQESQHESEQDF. Residues 214–234 form a helical membrane-spanning segment; the sequence is IFGVISIIFVAVSIVNMALMS. Over 235 to 241 the chain is Extracellular; it reads AELSWLN. The helical transmembrane segment at 242-262 threads the bilayer; the sequence is LQLLEILEYVCISWFTGEFVL. The Cytoplasmic portion of the chain corresponds to 263–279; the sequence is RFLCVKDRCHFLRKVPN. A helical membrane pass occupies residues 280 to 300; the sequence is IIDLLAILPFYITLLVESLSG. Over 301-312 the chain is Extracellular; it reads SHTTQELENVGR. The chain crosses the membrane as a helical; Voltage-sensor span at residues 313 to 334; it reads LVQVLRLLRALRMLKLGRHSTG. Residues 335–348 are Cytoplasmic-facing; it reads LRSLGMTITQCYEE. The chain crosses the membrane as a helical span at residues 349–369; that stretch reads VGLLLLFLSVGISIFSTIEYF. A Selectivity filter motif is present at residues 395–400; it reads TVGYGD. Residues 410 to 430 form a helical membrane-spanning segment; the sequence is IVAFMCILSGILVLALPIAII. Residues 431 to 503 lie on the Cytoplasmic side of the membrane; it reads NDRFSACYFT…RSSGGDDFWF (73 aa).

It belongs to the potassium channel family. V (TC 1.A.1.2) subfamily. Kv8.1/KCNV1 sub-subfamily. In terms of assembly, heteromultimer with KCNB1 and KCNB2. Interacts with KCNC4 and KCND1.

It is found in the cell membrane. Potassium channel subunit that does not form functional channels by itself. Modulates KCNB1 and KCNB2 channel activity by shifting the threshold for inactivation to more negative values and by slowing the rate of inactivation. Can down-regulate the channel activity of KCNB1, KCNB2, KCNC4 and KCND1, possibly by trapping them in intracellular membranes. The polypeptide is Potassium voltage-gated channel subfamily V member 1 (Kcnv1) (Mus musculus (Mouse)).